Consider the following 666-residue polypeptide: Non-receptor tyrosine-protein kinase TNK1 (666 aa).

Serine 96 is subject to Phosphoserine. A Protein kinase domain is found at 116-383; that stretch reads VRRGELLGSG…LEGLLQEAWL (268 aa). Residues 122 to 130 and lysine 148 contribute to the ATP site; that span reads LGSGCFGVV. Aspartate 245 (proton acceptor) is an active-site residue. Serine 255 is subject to Phosphoserine. Positions 381–441 constitute an SH3 domain; that stretch reads AWLSEGRCVR…PASAVTLADL (61 aa). The interval 442 to 589 is disordered; that stretch reads GGSPVTHPAH…VPSGGPLSDP (148 aa). The span at 457–473 shows a compositional bias: basic and acidic residues; sequence HGEKCRGGTDGDREKAT. Residue serine 498 is modified to Phosphoserine. Residue threonine 510 is modified to Phosphothreonine. Serine 515 is modified (phosphoserine). Residues 531 to 544 show a composition bias toward pro residues; sequence DLPPRPPDLPPRPP. Serine 582 is modified (phosphoserine).

This sequence belongs to the protein kinase superfamily. Tyr protein kinase family. Interacts with the SH3 domain of PLCG1 via its Pro-rich domain. Autophosphorylated on tyrosine residues. Expressed in whole embryo and all adult tissues examined including liver, kidney, heart, brain, skeletal muscle and intestine. Also detected in various myeloid- and lymphoid-derived cell lines.

The protein localises to the membrane. Its subcellular location is the cytoplasm. The catalysed reaction is L-tyrosyl-[protein] + ATP = O-phospho-L-tyrosyl-[protein] + ADP + H(+). In terms of biological role, may function in signaling pathways utilized broadly during fetal development and more selectively in adult tissues and in cells of the lymphohematopoietic system. Could specifically be involved in phospholipid signal transduction. Involved in negative regulation of cell growth. Has tumor suppressor properties. Plays a negative regulatory role in the Ras-MAPK pathway. The protein is Non-receptor tyrosine-protein kinase TNK1 of Mus musculus (Mouse).